Reading from the N-terminus, the 513-residue chain is Palmitoyltransferase ZDHHC14 (513 aa).

The Cytoplasmic segment spans residues 1–59; that stretch reads MHLGVEEPIRECQYNQICTHNSSPMDTPHIKKKKNKRKWQVFPGRNRFYCNGRIMMAKQ. A helical membrane pass occupies residues 60 to 80; that stretch reads TGVFYLTMVLILVTSGLFFAF. The Lumenal segment spans residues 81-88; sequence DCPFLASN. The helical transmembrane segment at 89–109 threads the bilayer; sequence LTPAIPAIGGVLFVFVMGMLL. The Cytoplasmic portion of the chain corresponds to 110-207; that stretch reads RASFSDPGVL…GNCVGRRNYR (98 aa). The DHHC domain maps to 164-214; sequence KYCFTCKIFRPPRASHCSLCDNCVDRFDHHCPWVGNCVGRRNYRFFYLFIL. Catalysis depends on cysteine 194, which acts as the S-palmitoyl cysteine intermediate. Residues 208–228 form a helical membrane-spanning segment; sequence FFYLFILSLSFLTIFIFAFVI. Residues 229–266 lie on the Lumenal side of the membrane; it reads THVILNALRKALALSTAADFEAVQKDPTGLAFLVLSKT. The chain crosses the membrane as a helical span at residues 267–287; sequence ALLDILEVVVCFFSVWSIVGL. The Cytoplasmic portion of the chain corresponds to 288–513; the sequence is SGFHTYLISS…VRGLVKLSSV (226 aa). Residues 348–369 form a disordered region; the sequence is FIQPDTPQPATQTNGTSACPPN. Residues 355–369 show a composition bias toward polar residues; it reads QPATQTNGTSACPPN.

It belongs to the DHHC palmitoyltransferase family. ERF2/ZDHHC9 subfamily.

It localises to the endoplasmic reticulum membrane. Its subcellular location is the golgi apparatus membrane. It carries out the reaction L-cysteinyl-[protein] + hexadecanoyl-CoA = S-hexadecanoyl-L-cysteinyl-[protein] + CoA. In terms of biological role, palmitoyltransferase that could catalyze the addition of palmitate onto various protein substrates. The polypeptide is Palmitoyltransferase ZDHHC14 (zdhhc14) (Danio rerio (Zebrafish)).